The chain runs to 715 residues: Methionine--tRNA ligase (715 aa).

The 'HIGH' region motif lies at 17–27 (PYANGPIHLGH). Residues cysteine 148, cysteine 151, cysteine 161, and cysteine 164 each coordinate Zn(2+). Residues 359–363 (KMSKS) carry the 'KMSKS' region motif. Lysine 362 is a binding site for ATP. The 102-residue stretch at 614–715 (DLSKVELRVG…KDAKPGDRLK (102 aa)) folds into the tRNA-binding domain.

Belongs to the class-I aminoacyl-tRNA synthetase family. MetG type 1 subfamily. Homodimer. Requires Zn(2+) as cofactor.

Its subcellular location is the cytoplasm. The catalysed reaction is tRNA(Met) + L-methionine + ATP = L-methionyl-tRNA(Met) + AMP + diphosphate. Its function is as follows. Is required not only for elongation of protein synthesis but also for the initiation of all mRNA translation through initiator tRNA(fMet) aminoacylation. This is Methionine--tRNA ligase from Leptospira interrogans serogroup Icterohaemorrhagiae serovar Lai (strain 56601).